A 644-amino-acid polypeptide reads, in one-letter code: Fructose-1,6-bisphosphatase class 3 (644 aa).

The protein belongs to the FBPase class 3 family. Mn(2+) is required as a cofactor.

The enzyme catalyses beta-D-fructose 1,6-bisphosphate + H2O = beta-D-fructose 6-phosphate + phosphate. It participates in carbohydrate biosynthesis; gluconeogenesis. The protein is Fructose-1,6-bisphosphatase class 3 of Oceanobacillus iheyensis (strain DSM 14371 / CIP 107618 / JCM 11309 / KCTC 3954 / HTE831).